Consider the following 277-residue polypeptide: DNA polymerase epsilon subunit C (277 aa).

Composition is skewed to polar residues over residues 1–16 (MSSPMPQSSLNNSQVA) and 24–39 (ETPSTTPPMISNTNTP). Positions 1–91 (MSSPMPQSSL…EEEEEEESLS (91 aa)) are disordered. Positions 69–89 (ENEDDDEQEEEEEEEEEEEES) are enriched in acidic residues.

In terms of assembly, heterotetramer. Consists of four subunits: POL2, DPB2, DPB3 and DPB4.

It localises to the nucleus. Functionally, as accessory component of the DNA polymerase epsilon (DNA polymerase II) participates in chromosomal DNA replication. The protein is DNA polymerase epsilon subunit C (DPB3) of Debaryomyces hansenii (strain ATCC 36239 / CBS 767 / BCRC 21394 / JCM 1990 / NBRC 0083 / IGC 2968) (Yeast).